The sequence spans 123 residues: Probable cytochrome c 2.2 (123 aa).

The segment at 1 to 21 (MGKKKSDTASGGAIPEGDNEK) is disordered. 4 residues coordinate heme c: cysteine 30, cysteine 33, histidine 34, and methionine 95.

The protein belongs to the cytochrome c family. Binds 1 heme c group covalently per subunit.

The protein localises to the mitochondrion intermembrane space. Electron carrier protein. The oxidized form of the cytochrome c heme group can accept an electron from the heme group of the cytochrome c1 subunit of cytochrome reductase. Cytochrome c then transfers this electron to the cytochrome oxidase complex, the final protein carrier in the mitochondrial electron-transport chain. This Caenorhabditis elegans protein is Probable cytochrome c 2.2 (cyc-2.2).